The following is a 534-amino-acid chain: MRREHARAILFPLVRLPWLLIVLALIAYGAVLAGGIVPALTGAAVSGIAMFTLGAALAIYTGMRVGAAPVRLGGRAASARRAYLTLAFAATGVLYLAVIFGAINTSAGTLWTCQTWPGCAMTGDSAWLALAHRGLAGGATLLIAALAVQTWRIRHERSLRIAVAWALGLMLIQNLVGLAQVLLAQGGESQPVAVARLMHLGLSATAWGALVVLTTLALRRPFPAVALLRPAHVARPGMTDTVLLEGKPSLLKDYISLTKPGVISLLILTTITSMYITPAGIPELSLVLWTTLGGWLMASGSHSINCYLDKDIDVNMGRTGRRPIPSGRIPAWHALALGIALGVVAFVILALFVNLLAAILALAGFLYYVFIYTIWLKRTSKHNIVIGGGAGAFPPLVGWAAVTGSLAPEALLLWLIVFFWTPPHFWALALIRQKDYARAGVPMLPVVEGDQETRRQIVIYTLSMLALTALPPVLGMLGWAYLMSAAVSGGLFLHYALKLRRDGTTTTAWALYKYSLLYLAILFVAMAVDRVVFA.

Residues 1 to 251 form a unknown region; it reads MRREHARAIL…VLLEGKPSLL (251 aa). The next 15 helical transmembrane spans lie at 17–37, 39–59, 83–103, 128–148, 163–183, 197–217, 261–281, 284–304, 339–359, 360–380, 384–404, 411–431, 457–477, 479–499, and 508–528; these read PWLL…GGIV, ALTG…ALAI, YLTL…FGAI, LALA…ALAV, VAWA…QVLL, LMHL…TTLA, GVIS…PAGI, LSLV…SHSI, IALG…LAAI, LALA…KRTS, IVIG…AVTG, LLLW…LALI, IVIY…LGML, WAYL…ALKL, and AWAL…AMAV. The protoheme IX prenyltransferase stretch occupies residues 252 to 530; sequence KDYISLTKPG…ILFVAMAVDR (279 aa).

It in the C-terminal section; belongs to the UbiA prenyltransferase family. Protoheme IX farnesyltransferase subfamily.

It localises to the cell membrane. It catalyses the reaction heme b + (2E,6E)-farnesyl diphosphate + H2O = Fe(II)-heme o + diphosphate. Its pathway is porphyrin-containing compound metabolism; heme O biosynthesis; heme O from protoheme: step 1/1. Converts heme B (protoheme IX) to heme O by substitution of the vinyl group on carbon 2 of heme B porphyrin ring with a hydroxyethyl farnesyl side group. In Roseiflexus sp. (strain RS-1), this protein is Protoheme IX farnesyltransferase (ctaB).